Consider the following 275-residue polypeptide: Voltage-dependent calcium channel gamma-5 subunit (275 aa).

4 helical membrane passes run 8-28, 103-123, 129-149, and 181-201; these read ALTL…GIAV, FPLV…IGHI, ILAF…VVGL, and FAAI…YLFM.

Belongs to the PMP-22/EMP/MP20 family. CACNG subfamily. The L-type calcium channel is composed of five subunits: alpha-1, alpha-2/delta, beta and gamma. Acts as an auxiliary subunit for AMPA-selective glutamate receptors (AMPARs). Found in a complex with GRIA1, GRIA2, GRIA3, GRIA4, CNIH2, CNIH3, CACNG2, CACNG3, CACNG4, CACNG7 and CACNG8. Interacts with GRIA1, GRIA2, GRIA3 and GRIA4.

Its subcellular location is the membrane. It localises to the postsynaptic density membrane. Its function is as follows. Regulates the gating properties of AMPA-selective glutamate receptors (AMPARs). Modulates their gating properties by accelerating their rates of activation, deactivation and desensitization. Displays subunit-specific AMPA receptor regulation. Shows specificity for GRIA1, GRIA4 and the long isoform of GRIA2. According to PubMed:18817736, shows only specificity for GRIA2 and specifically to the form of GRIA2 for which a single amino acid in the pore region has been edited from a glutamine to an arginine residue. Thought to stabilize the calcium channel in an inactivated (closed) state. This is Voltage-dependent calcium channel gamma-5 subunit (Cacng5) from Rattus norvegicus (Rat).